The following is a 303-amino-acid chain: ATP synthase gamma chain (303 aa).

This sequence belongs to the ATPase gamma chain family. F-type ATPases have 2 components, CF(1) - the catalytic core - and CF(0) - the membrane proton channel. CF(1) has five subunits: alpha(3), beta(3), gamma(1), delta(1), epsilon(1). CF(0) has three main subunits: a, b and c.

The protein localises to the cell inner membrane. Functionally, produces ATP from ADP in the presence of a proton gradient across the membrane. The gamma chain is believed to be important in regulating ATPase activity and the flow of protons through the CF(0) complex. This is ATP synthase gamma chain from Bartonella quintana (strain Toulouse) (Rochalimaea quintana).